A 302-amino-acid polypeptide reads, in one-letter code: Nudix hydrolase 22, chloroplastic (302 aa).

A chloroplast-targeting transit peptide spans 1-25 (MKSGASAASPTAKSFNFGSSRLLAL). In terms of domain architecture, Nudix hydrolase spans 73-229 (PKKAAVLICL…DSDYVIWGLT (157 aa)). The Nudix box motif lies at 114–135 (KAEEHDKDDGITATREAEEEIG). 2 residues coordinate Mg(2+): Glu-129 and Glu-133.

The protein belongs to the Nudix hydrolase family. Mg(2+) serves as cofactor. Requires Mn(2+) as cofactor. Expressed in roots, leaves, stems and inflorescences.

It is found in the plastid. It localises to the chloroplast. Its function is as follows. Probably mediates the hydrolysis of some nucleoside diphosphate derivatives. The chain is Nudix hydrolase 22, chloroplastic (NUDT22) from Arabidopsis thaliana (Mouse-ear cress).